The chain runs to 4293 residues: Polycystin-1 (4293 aa).

The N-terminal stretch at 1 to 23 (MPLGAPALLALALGLGLWLGALA) is a signal peptide. In terms of domain architecture, LRRNT spans 24–67 (GDPGRGCGPCPLPCFCGPAPDAACRVNCSGRWLQTLGPSLRIPA). Residues 24–3066 (GDPGRGCGPC…IFPEPSASIN (3043 aa)) are Extracellular-facing. N-linked (GlcNAc...) asparagine glycosylation is found at N50 and N89. LRR repeat units lie at residues 68-91 (DATA…VNLS) and 92-113 (ALVE…VFAN). N-linked (GlcNAc...) asparagine glycans are attached at residues N116 and N121. Residues 125–178 (NPFECNCGLAWLPRWAKEHQVHVVQSEATTCRGPIPLAGQPLLSIPLLDNACGE) form the LRRCT domain. The WSC domain maps to 177-271 (GEEYVACLPD…PTLLQHTFPA (95 aa)). N-linked (GlcNAc...) asparagine glycans are attached at residues N187 and N239. The PKD 1 domain occupies 272-359 (SPGATLVGPH…VQVEATPTVL (88 aa)). N-linked (GlcNAc...) asparagine glycosylation is present at N370. The C-type lectin domain maps to 415–530 (GNGHCYRLVA…CSAPHSYVCE (116 aa)). 2 disulfide bridges follow: C436-C529 and C507-C521. The tract at residues 613 to 632 (GGAAAVPEGSSEPDNRTEPA) is disordered. N627 carries an N-linked (GlcNAc...) asparagine glycan. In terms of domain architecture, LDL-receptor class A; atypical spans 633 to 666 (PKCVPEELWCPGANVCIPFDASCNSHVCINGSVS). Intrachain disulfides connect C635–C648 and C642–C660. Residues N662, N740, N804, N835, N848, N859, N884, N915, N998, N1004, N1028, N1084, N1096, N1107, N1172, N1188, N1234, N1263, N1330, N1342, N1376, N1444, N1449, N1468, N1535, N1548, N1557, N1643, N1657, N1706, N1730, N1788, N1831, N1863, and N1876 are each glycosylated (N-linked (GlcNAc...) asparagine). PKD domains are found at residues 849-922 (ATAT…RVTA), 929-1014 (LRAV…NKMH), 1017-1123 (WVSA…LPNV), 1121-1209 (PNVA…LHGL), 1207-1292 (HGLT…EVLH), 1288-1377 (LEVL…IRNI), 1376-1463 (NITL…VLVT), 1462-1545 (VTGI…VRGL), 1544-1629 (GLTI…IEGL), 1630-1718 (QVAG…VESL), 1716-1802 (ESLI…VGGL), 1804-1886 (IRTS…IVNL), 1885-1970 (NLML…VVGL), 1972-2053 (VPNC…MVEV), and 2056-2144 (IIQY…ACRE). N-linked (GlcNAc...) asparagine glycans are attached at residues N1987, N2046, N2070, N2121, N2244, N2349, N2391, N2408, N2414, N2563, N2640, N2713, N2749, N2813, N2836, N2873, N2948, and N2986. The REJ domain maps to 2142 to 2828 (CREPEVEVAL…QLIFLVDSNP (687 aa)). The GAIN-B domain maps to 2857–3055 (PIEQLAAERA…SLFVPPSHVQ (199 aa)). Cysteines 3007 and 3035 form a disulfide. Residues 3007–3055 (CQYFSEEMMMWRTEGIVPLEETSPSQAVCLTRHLTAFGASLFVPPSHVQ) form a GPS region. The chain crosses the membrane as a helical span at residues 3067–3087 (YIVLLTCVICLVTYVVMAMIL). At 3088–3269 (RKLDQLDVSR…DRPPRSRFTR (182 aa)) the chain is on the cytoplasmic side. Positions 3110–3225 (FKYEILVKTG…EANGGLVEKE (116 aa)) constitute a PLAT domain. A helical transmembrane segment spans residues 3270–3290 (VQRVTCCVLLLCLFLAANAVW). Topologically, residues 3291-3315 (YGVVRDTTYSMGPVSSLISPGVDTV) are extracellular. Residues 3316–3336 (AIGLVSSVVVYPVYLAVLFLF) traverse the membrane as a helical segment. Topologically, residues 3337–3549 (RMSRSKVSGD…LPAWCAPLAH (213 aa)) are cytoplasmic. The helical transmembrane segment at 3550-3570 (GLSLLLVAVAVAVSGWIGASF) threads the bilayer. Topologically, residues 3571 to 3572 (PP) are extracellular. A helical transmembrane segment spans residues 3573 to 3593 (SVSVMWLLSSSSSFLASFLGW). At 3594-3655 (EPLKVLLEAL…LAKEEARKVK (62 aa)) the chain is on the cytoplasmic side. The helical transmembrane segment at 3656-3676 (RLHDMLKRLLVYMLFLLVTLL) threads the bilayer. Residues 3677–3891 (ANYGDASCHG…RLSTGLSLPL (215 aa)) lie on the Extracellular side of the membrane. Residues N3728 and N3780 are each glycosylated (N-linked (GlcNAc...) asparagine). Residues 3892–3912 (LTSVCLLLFALYFSMAEVQTW) form a helical membrane-spanning segment. Residues 3913-3925 (RKDGCACTARPDT) are Cytoplasmic-facing. Residues 3926–3946 (WARCLLVILTAATGLVRLAQL) form a helical membrane-spanning segment. Over 3947 to 3974 (GIADRQWTHFVQDHPRHFTSFDQVAQLG) the chain is Extracellular. Residues 3975–3995 (SVARGLAASLLFLLLVKAAQQ) traverse the membrane as a helical segment. Residues 3996–4017 (LRFVRQWSVFGKTLCRALPELM) are Cytoplasmic-facing. Residues 4018–4038 (GATLGLVLLGVAYAQMAILLI) form a helical membrane-spanning segment. The Extracellular segment spans residues 4039 to 4080 (SSGADTLYNMARAFLVLCPGARVPTLCPSESWYLSPLLCVGL). Residues 4081–4100 (WALRVWGALRLGAILLRWRY) form a helical membrane-spanning segment. The Cytoplasmic portion of the chain corresponds to 4101–4293 (HALRGELYRP…PNNKVHPSST (193 aa)). 2 disordered regions span residues 4150–4197 (PLPS…STLK) and 4235–4293 (SLQG…PSST). A compositionally biased stretch (low complexity) spans 4153–4172 (SRSSRGSKSSPVVLPPSSGS). Position 4156 is a phosphoserine; by PRKX; in vitro (S4156). Over residues 4173–4195 (EASHPSTSSSQPDGPSASLSRST) the composition is skewed to polar residues. A coiled-coil region spans residues 4210 to 4241 (ESLLVQFDRLNQATEDVYQLEQQLQSLQGHGH). Residues 4238 to 4256 (GHGHNGPPSSPSPGCFPGS) show a composition bias toward low complexity. Polar residues predominate over residues 4265–4276 (SRASQGLDQTVG).

Belongs to the polycystin family. Component of the heterotetrameric polycystin channel complex with PKD2; the tetramer contains one PKD1 chain and three PKD2 chains. Interacts with PKD2; the interaction is required for ciliary localization. Interacts with PKD2L1. Interacts with PRKX; involved in differentiation and controlled morphogenesis of the kidney. Interacts (via extracellular domain) with WNT3A, WNT4 and WNT9B. Interacts with WNT5A, DVL1 and DVL2. Interacts with NPHP1 (via SH3 domain). Interacts with BBS1, BBS4, BBS5 and TTC8. Interacts with RGS7. Interacts (via C-terminal domain) with RABEP1; the interaction connects PKD1:PKD2 to GGA1 and ARL3 that mediate the ciliary targeting. Interacts (via the PKD repeats in the N-terminal extracellular region) with EPCIP; the interaction is not dependent on N-glycosylation of either protein. In terms of processing, N-glycosylated. Post-translationally, after synthesis, undergoes autoproteolytic cleavage between Leu-3040 and Thr-3041 in the GPS region of the GAIN-B domain. Cleavage at the GPS region occurs through a cis-autoproteolytic mechanism involving an ester-intermediate via N-O acyl rearrangement. This process takes place in the early secretory pathway, depends on initial N-glycosylation, and requires the REJ domain. PKD1 is ubiquitously and incompletely cleaved in wild-type mice, so that uncleaved and cleaved PKD1 molecules coexist. The differential patterns of cleavage during embryonic development, as well as in adult mice, suggest different functions of uncleaved and cleaved molecules.

The protein localises to the cell membrane. It localises to the cell projection. Its subcellular location is the cilium. The protein resides in the endoplasmic reticulum. It is found in the golgi apparatus. The protein localises to the vesicle. It localises to the secreted. Its subcellular location is the extracellular exosome. In terms of biological role, component of a heteromeric calcium-permeable ion channel formed by PKD1 and PKD2 that is activated by interaction between PKD1 and a Wnt family member, such as WNT3A and WNT9B. Both PKD1 and PKD2 are required for channel activity. Involved in renal tubulogenesis. Involved in fluid-flow mechanosensation by the primary cilium in renal epithelium. Acts as a regulator of cilium length, together with PKD2. The dynamic control of cilium length is essential in the regulation of mechanotransductive signaling. The cilium length response creates a negative feedback loop whereby fluid shear-mediated deflection of the primary cilium, which decreases intracellular cAMP, leads to cilium shortening and thus decreases flow-induced signaling. May be an ion-channel regulator. Involved in adhesive protein-protein and protein-carbohydrate interactions. Likely to be involved with polycystin-1-interacting protein 1 in the detection, sequestration and exocytosis of senescent mitochondria. In Mus musculus (Mouse), this protein is Polycystin-1.